We begin with the raw amino-acid sequence, 779 residues long: Neutral ceramidase 1 (779 aa).

Ser-350 acts as the Nucleophile in catalysis. N-linked (GlcNAc...) asparagine glycans are attached at residues Asn-368, Asn-432, and Asn-667.

Belongs to the neutral ceramidase family. Mostly expressed in stems, leaves, roots and siliques, and, to a lower extent, in flowers.

Its subcellular location is the secreted. The protein localises to the endoplasmic reticulum. The protein resides in the golgi apparatus. The enzyme catalyses an N-acylsphing-4-enine + H2O = sphing-4-enine + a fatty acid. Hydrolyzes the sphingolipid ceramide into sphingosine and free fatty acid. Regulates sphingolipid homeostasis. Promotes oxidative stress resistance. This chain is Neutral ceramidase 1, found in Arabidopsis thaliana (Mouse-ear cress).